Here is a 3414-residue protein sequence, read N- to C-terminus: Genome polyprotein (3414 aa).

The tract at residues 1 to 30 (MVKKAILKGKGGGPPRRVSKETATKTRQPR) is disordered. The Cytoplasmic portion of the chain corresponds to 2 to 98 (VKKAILKGKG…LQKRGKRRSA (97 aa)). A propeptide spans 97–117 (SATDWMSWLLVITLLGMTLAA) (ER anchor for the capsid protein C, removed in mature form by serine protease NS3). The helical transmembrane segment at 99–119 (TDWMSWLLVITLLGMTLAATV) threads the bilayer. At 120-242 (RKERDGSTVI…HLTRVEGWVW (123 aa)) the chain is on the extracellular side. A glycan (N-linked (GlcNAc...) asparagine; by host) is linked at Asn-144. A helical membrane pass occupies residues 243–260 (KNKLLALAMVTVVWLTLE). Residue Ser-261 is a topological domain, cytoplasmic. A helical membrane pass occupies residues 262-280 (VVTRVAVLVVLLCLAPVYA). Topologically, residues 281 to 727 (SRCTHLENRD…HTVLGGAFNS (447 aa)) are extracellular. 6 cysteine pairs are disulfide-bonded: Cys-283–Cys-310, Cys-340–Cys-396, Cys-340–Cys-401, Cys-354–Cys-385, Cys-372–Cys-396, and Cys-372–Cys-401. The tract at residues 378–391 (DRGWGNHCGLFGKG) is fusion peptide. Residue Asn-434 is glycosylated (N-linked (GlcNAc...) asparagine; by host). 2 disulfide bridges follow: Cys-466-Cys-570 and Cys-587-Cys-618. Residues 728-748 (IFGGVGFLPKLLLGVALAWLG) form a helical membrane-spanning segment. The Extracellular segment spans residues 749–755 (LNMRNPT). A helical transmembrane segment spans residues 756–776 (MSMSFLLAGGLVLAMTLGVGA). Over 777-1132 (DVGCAVDTER…RSMVVADNGE (356 aa)) the chain is Extracellular. 6 cysteine pairs are disulfide-bonded: Cys-780/Cys-791, Cys-831/Cys-920, Cys-955/Cys-1000, Cys-1057/Cys-1106, Cys-1068/Cys-1090, and Cys-1089/Cys-1093. N-linked (GlcNAc...) asparagine; by host glycosylation is found at Asn-861, Asn-983, and Asn-999. Residues 1133 to 1153 (LLSEGGVPGIVALFVVLEYII) form a helical membrane-spanning segment. At 1154 to 1158 (RRRPS) the chain is on the cytoplasmic side. Residues 1159–1179 (TGTTVVWGGIVVLALLVTGMV) form a helical membrane-spanning segment. Over 1180–1187 (RIESLVRY) the chain is Lumenal. A helical transmembrane segment spans residues 1188–1208 (VVAVGITFHLELGPEIVALML). The Cytoplasmic portion of the chain corresponds to 1209–1293 (LQAVFELRVG…LLMALMTQQD (85 aa)). A helical membrane pass occupies residues 1294–1314 (VVTVHHGLVCFLSVASACSVW). Residues 1315–1327 (RLLKGHREQKGLT) lie on the Lumenal side of the membrane. The helical transmembrane segment at 1328 to 1348 (WVVPLAGLLGGEGSGIRLLAF) threads the bilayer. Residues 1349-1359 (WELSAHRGRRS) are Cytoplasmic-facing. A helical transmembrane segment spans residues 1360–1378 (FSEPLTVVGVMLTLASGMM). Residues 1379–1382 (RHTS) are Lumenal-facing. Residues 1383–1403 (QEALCALAVASFLLLMLVLGT) form a helical membrane-spanning segment. Over 1404-1454 (RKMQLVAEWSGCVEWYPELVNEGGEVSLRVRQDAMGNFHLTELEKEERMMA) the chain is Cytoplasmic. The segment at 1410–1449 (AEWSGCVEWYPELVNEGGEVSLRVRQDAMGNFHLTELEKE) is interacts with and activates NS3 protease. Positions 1455 to 1475 (FWLIAGLAASAIHWSGILGVM) form an intramembrane region, helical. At 1476 to 2160 (GLWTLTEMLR…RMAERDAPEA (685 aa)) the chain is on the cytoplasmic side. Residues 1490-1669 (SDLVFSGQGG…EAEKSRPNLP (180 aa)) form the Peptidase S7 domain. Residues His-1543, Asp-1567, and Ser-1627 each act as charge relay system; for serine protease NS3 activity in the active site. Residues 1675-1831 (TGWTSKGQIT…ESNGAITSEE (157 aa)) form the Helicase ATP-binding domain. 1688–1695 (MHPGSGKT) serves as a coordination point for ATP. Positions 1779 to 1782 (DEAH) match the DEAH box motif. The Helicase C-terminal domain maps to 1841 to 2000 (DGFDWITEYE…TLRGPVATFY (160 aa)). Lys-1883 bears the N6-acetyllysine; by host mark. A helical membrane pass occupies residues 2161 to 2181 (FLTMVEMMVLGLATLGVIWCF). Topologically, residues 2182 to 2189 (VVRTSISR) are lumenal. An intramembrane region (helical) is located at residues 2190 to 2210 (MMLGTLVLLASLLLLWAGGVG). A topological domain (lumenal) is located at residue Tyr-2211. The chain crosses the membrane as a helical span at residues 2212-2232 (GNMAGVALIFYTLLTVLQPEA). At 2233 to 2244 (GKQRSSDDNKLA) the chain is on the cytoplasmic side. Residues 2245 to 2265 (YFLLTLCSLAGLVAANEMGFL) traverse the membrane as a helical segment. The Lumenal segment spans residues 2266–2299 (EKTKADLSTALWSEREEPRPWSEWTNVDIQPARS). An intramembrane region (helical) is located at residues 2300–2320 (WGTYVLVVSLFTPYIIHQLQT). Residues 2321 to 2343 (KIQQLVNSAVASGAQAMRDLGGG) lie on the Lumenal side of the membrane. The helical intramembrane region spans 2344–2364 (APFFGVAGHVMTLGVVSLIGA). Topologically, residues 2365–2368 (TPTS) are lumenal. A helical transmembrane segment spans residues 2369-2389 (LMVGVGLAALHLAIVVSGLEA). Topologically, residues 2390–2432 (ELTQRAHKVFFSAMVRNPMVDGDVINPFGEGEAKPALYERKMS) are cytoplasmic. The chain crosses the membrane as a helical span at residues 2433-2453 (LVLATVLCLMSVVMNRTVASI). Topologically, residues 2454 to 2477 (TEASAVGLAAAGQLLRPEADTLWT) are lumenal. A helical membrane pass occupies residues 2478–2498 (MPVACGMSGVVRGSLWGFLPL). Residues 2499-3414 (GHRLWLRASG…WELRLESSII (916 aa)) are Cytoplasmic-facing. An mRNA cap 0-1 NS5-type MT domain is found at 2512 to 2776 (GGSEGDTLGD…ELDLGVGTRC (265 aa)). Ser-2567 serves as a coordination point for S-adenosyl-L-methionine. Ser-2567 carries the phosphoserine modification. The active-site For 2'-O-MTase activity is Lys-2572. The S-adenosyl-L-methionine site is built by Gly-2597, Trp-2598, Thr-2615, Ile-2616, Asp-2642, and Val-2643. The active-site For 2'-O-MTase activity is the Asp-2657. Ile-2658 contributes to the S-adenosyl-L-methionine binding site. Residues Lys-2694 and Glu-2730 each act as for 2'-O-MTase activity in the active site. Residues 2730 to 2734 (EMYYS) form an interaction with host SCRIB region. Position 2732 (Tyr-2732) interacts with S-adenosyl-L-methionine. Positions 2950, 2954, 2959, and 2962 each coordinate Zn(2+). In terms of domain architecture, RdRp catalytic spans 3040-3189 (GLFYADDTAG…RPLDDRFGKA (150 aa)). Zn(2+) is bound by residues His-3224, Cys-3240, and Cys-3359.

In the N-terminal section; belongs to the class I-like SAM-binding methyltransferase superfamily. mRNA cap 0-1 NS5-type methyltransferase family. Homodimer. Interacts (via N-terminus) with host EXOC1 (via C-terminus); this interaction results in EXOC1 degradation through the proteasome degradation pathway. In terms of assembly, forms heterodimers with envelope protein E in the endoplasmic reticulum and Golgi. As to quaternary structure, homodimer; in the endoplasmic reticulum and Golgi. Interacts with protein prM. Interacts with non-structural protein 1. Homodimer; Homohexamer when secreted. Interacts with envelope protein E. In terms of assembly, interacts (via N-terminus) with serine protease NS3. As to quaternary structure, forms a heterodimer with serine protease NS3. May form homooligomers. Forms a heterodimer with NS2B. Interacts with NS4B. Interacts with unphosphorylated RNA-directed RNA polymerase NS5; this interaction stimulates RNA-directed RNA polymerase NS5 guanylyltransferase activity. In terms of assembly, interacts with serine protease NS3. Interacts with NS1. As to quaternary structure, homodimer. Interacts with host STAT2; this interaction inhibits the phosphorylation of the latter, and, when all viral proteins are present (polyprotein), targets STAT2 for degradation. Interacts with serine protease NS3. Interacts with host SCRIB; this interaction targets NS5 to the cell membrane periphery and nucleus, thereby allowing efficient host nuclear STAT1 inhibition. Specific enzymatic cleavages in vivo yield mature proteins. Cleavages in the lumen of endoplasmic reticulum are performed by host signal peptidase, whereas cleavages in the cytoplasmic side are performed by serine protease NS3. Signal cleavage at the 2K-4B site requires a prior NS3 protease-mediated cleavage at the 4A-2K site. In terms of processing, cleaved in post-Golgi vesicles by a host furin, releasing the mature small envelope protein M, and peptide pr. This cleavage is incomplete as up to 30% of viral particles still carry uncleaved prM. Post-translationally, N-glycosylated. N-glycosylated. The excreted form is glycosylated and this is required for efficient secretion of the protein from infected cells. In terms of processing, acetylated by host KAT5. Acetylation modulates NS3 RNA-binding and unwinding activities and plays an important positive role for viral replication. Post-translationally, phosphorylated on serines residues. This phosphorylation may trigger NS5 nuclear localization.

The protein localises to the virion. It localises to the host nucleus. It is found in the host cytoplasm. The protein resides in the host perinuclear region. Its subcellular location is the secreted. The protein localises to the virion membrane. It localises to the host endoplasmic reticulum membrane. The enzyme catalyses Selective hydrolysis of -Xaa-Xaa-|-Yaa- bonds in which each of the Xaa can be either Arg or Lys and Yaa can be either Ser or Ala.. It carries out the reaction RNA(n) + a ribonucleoside 5'-triphosphate = RNA(n+1) + diphosphate. The catalysed reaction is a ribonucleoside 5'-triphosphate + H2O = a ribonucleoside 5'-diphosphate + phosphate + H(+). It catalyses the reaction ATP + H2O = ADP + phosphate + H(+). The enzyme catalyses a 5'-end (5'-triphosphoguanosine)-ribonucleoside in mRNA + S-adenosyl-L-methionine = a 5'-end (N(7)-methyl 5'-triphosphoguanosine)-ribonucleoside in mRNA + S-adenosyl-L-homocysteine. It carries out the reaction a 5'-end (N(7)-methyl 5'-triphosphoguanosine)-ribonucleoside in mRNA + S-adenosyl-L-methionine = a 5'-end (N(7)-methyl 5'-triphosphoguanosine)-(2'-O-methyl-ribonucleoside) in mRNA + S-adenosyl-L-homocysteine + H(+). Plays a role in virus budding by binding to the cell membrane and gathering the viral RNA into a nucleocapsid that forms the core of a mature virus particle. During virus entry, may induce genome penetration into the host cytoplasm after hemifusion induced by the surface proteins. Can migrate to the cell nucleus where it modulates host functions. Functionally, inhibits RNA silencing by interfering with host Dicer. Its function is as follows. Prevents premature fusion activity of envelope proteins in trans-Golgi by binding to envelope protein E at pH6.0. After virion release in extracellular space, gets dissociated from E dimers. In terms of biological role, acts as a chaperone for envelope protein E during intracellular virion assembly by masking and inactivating envelope protein E fusion peptide. prM is the only viral peptide matured by host furin in the trans-Golgi network probably to avoid catastrophic activation of the viral fusion activity in acidic Golgi compartment prior to virion release. prM-E cleavage is inefficient, and many virions are only partially matured. These uncleaved prM would play a role in immune evasion. May play a role in virus budding. Exerts cytotoxic effects by activating a mitochondrial apoptotic pathway through M ectodomain. May display a viroporin activity. Functionally, binds to host cell surface receptor and mediates fusion between viral and cellular membranes. Envelope protein is synthesized in the endoplasmic reticulum in the form of heterodimer with protein prM. They play a role in virion budding in the ER, and the newly formed immature particle is covered with 60 spikes composed of heterodimer between precursor prM and envelope protein E. The virion is transported to the Golgi apparatus where the low pH causes dissociation of PrM-E heterodimers and formation of E homodimers. prM-E cleavage is inefficient, and many virions are only partially matured. These uncleaved prM would play a role in immune evasion. Its function is as follows. Involved in immune evasion, pathogenesis and viral replication. Once cleaved off the polyprotein, is targeted to three destinations: the viral replication cycle, the plasma membrane and the extracellular compartment. Essential for viral replication. Required for formation of the replication complex and recruitment of other non-structural proteins to the ER-derived membrane structures. Excreted as a hexameric lipoparticle that plays a role against host immune response. Antagonizing the complement function. Binds to the host macrophages and dendritic cells. Inhibits signal transduction originating from Toll-like receptor 3 (TLR3). In terms of biological role, component of the viral RNA replication complex that functions in virion assembly and antagonizes the host immune response. Required cofactor for the serine protease function of NS3. May have membrane-destabilizing activity and form viroporins. Functionally, displays three enzymatic activities: serine protease, NTPase and RNA helicase. NS3 serine protease, in association with NS2B, performs its autocleavage and cleaves the polyprotein at dibasic sites in the cytoplasm: C-prM, NS2A-NS2B, NS2B-NS3, NS3-NS4A, NS4A-2K and NS4B-NS5. NS3 RNA helicase binds RNA and unwinds dsRNA in the 3' to 5' direction. Its function is as follows. Regulates the ATPase activity of the NS3 helicase activity. NS4A allows NS3 helicase to conserve energy during unwinding. In terms of biological role, functions as a signal peptide for NS4B and is required for the interferon antagonism activity of the latter. Induces the formation of ER-derived membrane vesicles where the viral replication takes place. Inhibits interferon (IFN)-induced host STAT1 phosphorylation and nuclear translocation, thereby preventing the establishment of cellular antiviral state by blocking the IFN-alpha/beta pathway. Inhibits STAT2 translocation in the nucleus after IFN-alpha treatment. Functionally, replicates the viral (+) and (-) genome, and performs the capping of genomes in the cytoplasm. NS5 methylates viral RNA cap at guanine N-7 and ribose 2'-O positions. Besides its role in RNA genome replication, also prevents the establishment of cellular antiviral state by blocking the interferon-alpha/beta (IFN-alpha/beta) signaling pathway. Inhibits host TYK2 and STAT2 phosphorylation, thereby preventing activation of JAK-STAT signaling pathway. This is Genome polyprotein from Tick-borne encephalitis virus European subtype (strain Neudoerfl) (NEUV).